The sequence spans 185 residues: Protein OPG161 (185 aa).

The Intravirion segment spans residues 1-33 (MMTPENDEEQTSVFSATVYGDKIQGKNKRKRVI). A helical membrane pass occupies residues 34–56 (GLCIRISMVISLLSMITMSAFLI). The Virion surface segment spans residues 57–185 (VRLNQCMSAN…RKYFCVKTMN (129 aa)). The segment at 98 to 185 (ESCNGLYYQG…RKYFCVKTMN (88 aa)) is C-type lectin-like domain. Residues Asn-125 and Asn-135 are each glycosylated (N-linked (GlcNAc...) asparagine; by host).

This sequence belongs to the orthopoxvirus OPG161 family. Homodimer, disulfide-linked. Interacts with protein OPG190. Interacts (via C-terminus) with protein OPG164. Interacts with OPG162.

Its subcellular location is the virion membrane. It is found in the host membrane. In terms of biological role, forms a complex with OPG162 and OPG190 to coordinate the incorporation of OPG164 into wrapped enveloped virion (EV) membranes and, subsequently, the production of actin tails. Therefore plays an essential role in efficient cell-to-cell spread of viral particles. The polypeptide is Protein OPG161 (OPG161) (Homo sapiens (Human)).